Reading from the N-terminus, the 154-residue chain is Snaclec salmorin subunit A (154 aa).

The first 23 residues, 1–23 (MGRFIFVSFGLLVVFLSLSGTGA), serve as a signal peptide directing secretion. 3 cysteine pairs are disulfide-bonded: Cys-27/Cys-38, Cys-55/Cys-152, and Cys-127/Cys-144. Residues 34-153 (NNGHCYQAFN…CGQRNPFVCE (120 aa)) enclose the C-type lectin domain. Ca(2+) contacts are provided by Ser-66, Glu-68, and Glu-72. Residue Glu-153 participates in Ca(2+) binding.

It belongs to the snaclec family. In terms of assembly, heterodimer of subunits A and B; disulfide-linked. As to expression, expressed by the venom gland.

The protein localises to the secreted. In terms of biological role, inhibits thrombin-induced fibrinogen clotting and factor Xa-induced prothrombin activation. Binds to thrombin and prothrombin exosites. This Gloydius brevicauda (Korean slamosa snake) protein is Snaclec salmorin subunit A.